The sequence spans 141 residues: VLTGEDKKHVQHIWGLLSGAEEDLGAEVLYRMFQSYPPTKTYFPHFDVTQGSEQIRGHGKKFMAALGNAVKNVDNLSQALSELSNLHAYNLRVDPVNFKFLSQCLQVALAARLGKEYSPEVHSAVDKFMAAVAAVLAEKYR.

The Globin domain occupies 1–141 (VLTGEDKKHV…VAAVLAEKYR (141 aa)). Heme b contacts are provided by H58 and H87.

Belongs to the globin family. As to quaternary structure, heterotetramer of two alpha-D chains and two beta chains. In terms of tissue distribution, red blood cells.

Its function is as follows. Involved in oxygen transport from the lung to the various peripheral tissues. The sequence is that of Hemoglobin subunit alpha-D (HBAD) from Turdus merula (Common blackbird).